Reading from the N-terminus, the 160-residue chain is MSVTLHTNLGDIKCEIFCDEVPKSAENFLALCASGYYDGTIFHRNIKGFMIQGGDPKGTGKGGTSIWGKKFNDEIRDSLKHNARGMLSMANSGPNTNGSQFFITYAKQPHLNGLYTIFGKVIHGFEVLDIMEKTQTGPGDRPLAEIRLNRVTIHANPLAG.

The region spanning Val3–Ile153 is the PPIase cyclophilin-type domain.

It belongs to the cyclophilin-type PPIase family. Ubiquitous.

Its subcellular location is the cytoplasm. It carries out the reaction [protein]-peptidylproline (omega=180) = [protein]-peptidylproline (omega=0). In terms of biological role, PPIases accelerate the folding of proteins. It catalyzes the cis-trans isomerization of proline imidic peptide bonds in oligopeptides. This is Peptidyl-prolyl cis-trans isomerase CYP18-1 (CYP18-1) from Arabidopsis thaliana (Mouse-ear cress).